We begin with the raw amino-acid sequence, 352 residues long: MVPQELIEKIKLISPGTELRKALDDIISANFGALIFLVDDPKKYDDIIQGGFWLDTDFSAEKVYELSKMDGAIVLSEDLTRIYYANVHLVPDPTIPTGETGTRHRTAERLAKQTGKVVIAVSRRRNIISLYYKNYKYVVNQVDFLISKVTQAISTLEKYKDNFDKLLSDLEVLELENRVTLADVVRTLMKGVELLRITEETRPYIVELGEEGRLARMQLRELTEDVDDLMVLLIMDYSSDEVDEETAQAILQDFVTRREPSPISISRVLGYDVQQVSQLDDILVSARGYRLLKTAARIPISIGYNVVKMFKTLDQISKASVEDLKKVEGIGEKRAKAISESISSLKHRRTSE.

Residues 3-143 (PQELIEKIKL…NYKYVVNQVD (141 aa)) form the DAC domain. ATP contacts are provided by residues Gly-71, Leu-89, and 102-106 (TRHRT).

This sequence belongs to the DisA family. In terms of assembly, homooctamer. Mg(2+) is required as a cofactor.

It carries out the reaction 2 ATP = 3',3'-c-di-AMP + 2 diphosphate. Functionally, participates in a DNA-damage check-point. DisA forms globular foci that rapidly scan along the chromosomes searching for lesions. Its function is as follows. Also has diadenylate cyclase activity, catalyzing the condensation of 2 ATP molecules into cyclic di-AMP (c-di-AMP). c-di-AMP likely acts as a signaling molecule that may couple DNA integrity with a cellular process. This Thermotoga neapolitana (strain ATCC 49049 / DSM 4359 / NBRC 107923 / NS-E) protein is DNA integrity scanning protein DisA.